The sequence spans 197 residues: MKVLQEKILNEGKVLSGDVLKVDAFLNHQIDPVLMQEIGKEFAKRFKEENITKIVTIESSGIAPAVMAALELGVKVIFARKRKSLTLQDNMYVANVYSFTKQETNEISLSRNHIDENDRVLIIDDFLANGQAALGLMSLVEQAGASIAGIGIVIEKAFQDGGKKLREQGVRVESLAEIASLDNGTVTFVQQETAEVK.

Residues Leu-20 and Asn-27 each coordinate xanthine. A 5-phospho-alpha-D-ribose 1-diphosphate-binding site is contributed by 128 to 132 (ANGQA). Lys-156 is a xanthine binding site.

It belongs to the purine/pyrimidine phosphoribosyltransferase family. Xpt subfamily. In terms of assembly, homodimer.

It localises to the cytoplasm. The enzyme catalyses XMP + diphosphate = xanthine + 5-phospho-alpha-D-ribose 1-diphosphate. It functions in the pathway purine metabolism; XMP biosynthesis via salvage pathway; XMP from xanthine: step 1/1. In terms of biological role, converts the preformed base xanthine, a product of nucleic acid breakdown, to xanthosine 5'-monophosphate (XMP), so it can be reused for RNA or DNA synthesis. This is Xanthine phosphoribosyltransferase from Bacillus cereus (strain ATCC 14579 / DSM 31 / CCUG 7414 / JCM 2152 / NBRC 15305 / NCIMB 9373 / NCTC 2599 / NRRL B-3711).